We begin with the raw amino-acid sequence, 336 residues long: tRNA N6-adenosine threonylcarbamoyltransferase (336 aa).

Fe cation contacts are provided by histidine 115, histidine 119, and tyrosine 136. Substrate-binding positions include 136–140 (YVAGG), aspartate 168, glutamate 185, and serine 266. Fe cation is bound at residue aspartate 294.

This sequence belongs to the KAE1 / TsaD family. It depends on Fe(2+) as a cofactor.

It localises to the cytoplasm. The catalysed reaction is L-threonylcarbamoyladenylate + adenosine(37) in tRNA = N(6)-L-threonylcarbamoyladenosine(37) in tRNA + AMP + H(+). Its function is as follows. Required for the formation of a threonylcarbamoyl group on adenosine at position 37 (t(6)A37) in tRNAs that read codons beginning with adenine. Is probably involved in the transfer of the threonylcarbamoyl moiety of threonylcarbamoyl-AMP (TC-AMP) to the N6 group of A37. The sequence is that of tRNA N6-adenosine threonylcarbamoyltransferase from Thermofilum pendens (strain DSM 2475 / Hrk 5).